The chain runs to 494 residues: MFS-type transporter lnaF (494 aa).

The segment at 1–51 (MTYDPENAMGEARADAPVEAEKEHEATQTTVKESTLGYDNSSDPSRRDSYR) is disordered. The span at 12 to 26 (ARADAPVEAEKEHEA) shows a compositional bias: basic and acidic residues. 3 N-linked (GlcNAc...) asparagine glycosylation sites follow: Asn-40, Asn-58, and Asn-68. Helical transmembrane passes span 105-125 (SLLIGAILGVLALGYTSDMFS), 128-148 (AGLLFTSGLVAIGTLMSTLAL), 156-176 (MLWYFVIVRGIAGFGVGGEYP), 203-223 (TLMATSAAPIQMIVYLICLIA), 228-248 (LPVTFHAIYSIATILPVIIMV), 290-310 (LAFFLYDFINFPNSIMSSTII), 323-343 (AIWQVILGALPVPGVIVGAWL), 354-374 (ILGFAGYMVLGFVIGGTFPHL), 383-403 (VLYGLLQALGHMGPGATIGLI), and 446-466 (STFYLAGGIAILGMIVYWFLP).

Belongs to the major facilitator superfamily. Sugar transporter (TC 2.A.1.1) family.

It is found in the cell membrane. MFS-type transporter; part of the lna gene cluster that mediates the biosynthesis of diastereomeric piperazines. Lna and lnb clusters encode sets of enzymes that produce overlapping sets of previously undescribed metabolites such as piperazinomycin-like metabolites or morpholine. The lna and lnb biosynthetic pathways appear to be part of a signaling network that controls the formation of sclerotia, a resilient overwintering structure. May be involved in the secretion of the metabolites produced by the lna and lnb clusters. The polypeptide is MFS-type transporter lnaF (Aspergillus flavus (strain ATCC 200026 / FGSC A1120 / IAM 13836 / NRRL 3357 / JCM 12722 / SRRC 167)).